Reading from the N-terminus, the 276-residue chain is Diaminopimelate epimerase (276 aa).

Residues asparagine 13, glutamine 46, and asparagine 66 each coordinate substrate. Cysteine 75 serves as the catalytic Proton donor. Substrate is bound by residues 76–77, asparagine 159, asparagine 192, and 210–211; these read GN and ER. The active-site Proton acceptor is the cysteine 219. Position 220-221 (220-221) interacts with substrate; it reads GT.

This sequence belongs to the diaminopimelate epimerase family. Homodimer.

The protein resides in the cytoplasm. It carries out the reaction (2S,6S)-2,6-diaminopimelate = meso-2,6-diaminopimelate. It participates in amino-acid biosynthesis; L-lysine biosynthesis via DAP pathway; DL-2,6-diaminopimelate from LL-2,6-diaminopimelate: step 1/1. Catalyzes the stereoinversion of LL-2,6-diaminopimelate (L,L-DAP) to meso-diaminopimelate (meso-DAP), a precursor of L-lysine and an essential component of the bacterial peptidoglycan. The protein is Diaminopimelate epimerase of Pseudomonas fluorescens (strain Pf0-1).